Here is a 130-residue protein sequence, read N- to C-terminus: Small ribosomal subunit protein uS11 (130 aa).

The protein belongs to the universal ribosomal protein uS11 family. In terms of assembly, part of the 30S ribosomal subunit. Interacts with proteins S7 and S18. Binds to IF-3.

Its function is as follows. Located on the platform of the 30S subunit, it bridges several disparate RNA helices of the 16S rRNA. Forms part of the Shine-Dalgarno cleft in the 70S ribosome. This Microcystis aeruginosa (strain NIES-843 / IAM M-2473) protein is Small ribosomal subunit protein uS11.